Reading from the N-terminus, the 446-residue chain is MRKYFGTDGIRGRANGVITPELALKVGQAAGLLFQRGEYRHRVVIGKDTRLSGYMIETALVAGFTSVGMDVLLLGPMPTPAVAMLTRSMRADLGVMISASHNPYEDNGIKLFGPDGFKLSDEVEHEIERLIDSDLQKRLSASADLGRAKRIESVHARYIEFAKRTLPRNITLDGLRVVVDCANGAAYRVAPETLWELGAEVIAIGTEPDGFNINRDVGSTAPDALVRKVRELRADIGIALDGDADRVLVVDEKGQRVDGDQLMAVVARSWKEDERLTQPGIVATIMSNLGLERYLGGLGLSLVRTAVGDRYVLEHMREHGYNLGGEQSGHIIMSDYATTGDGLVAALQLLTVVQRQKRPVSEVCHCFDPLPQVLKNVRYGAGEPLRKDSVVTAIEGARQRLGNAGRLVIRPSGTEPVIRVMAEGDDRDLVVEVVDEVVEALRKAAA.

Serine 100 acts as the Phosphoserine intermediate in catalysis. The Mg(2+) site is built by serine 100, aspartate 241, aspartate 243, and aspartate 245. At serine 100 the chain carries Phosphoserine.

This sequence belongs to the phosphohexose mutase family. Mg(2+) is required as a cofactor. Post-translationally, activated by phosphorylation.

The catalysed reaction is alpha-D-glucosamine 1-phosphate = D-glucosamine 6-phosphate. Catalyzes the conversion of glucosamine-6-phosphate to glucosamine-1-phosphate. In Methylobacterium nodulans (strain LMG 21967 / CNCM I-2342 / ORS 2060), this protein is Phosphoglucosamine mutase.